Here is a 1985-residue protein sequence, read N- to C-terminus: Histone-lysine N-methyltransferase SETD1B (1985 aa).

Over residues 1 to 11 (MENSHPHHHHQ) the composition is skewed to basic residues. The segment at 1 to 25 (MENSHPHHHHQQPPPQPGPSGERRN) is disordered. The interaction with WDR82 stretch occupies residues 67–97 (VEDPRVVGIWTKNKELELSVPKFKIDEFYVG). Positions 92 to 180 (DEFYVGPVPP…NIIHVELDTK (89 aa)) constitute an RRM domain. Disordered regions lie at residues 234–304 (GCGS…QDPT), 353–710 (GSSG…PPPA), 955–1480 (VKRK…RTGP), 1519–1624 (QLPP…STKL), and 1658–1687 (RGPW…PQPL). Polar residues-rich tracts occupy residues 242-258 (VTPN…TAYS), 264-273 (TPNSYGQGTP), 281-304 (PFSQ…QDPT), and 353-365 (GSSG…QSQD). The span at 366 to 381 (ATTFAHTPPPAQTATA) shows a compositional bias: low complexity. Pro residues-rich tracts occupy residues 393-404 (TPAPPFPPPPEE), 423-433 (PAPPPLPPAEP), and 440-449 (GTPPGPPPPD). The segment covering 484-512 (EKPHDSLDSRIEMLLKEQRTKLPFLREQD) has biased composition (basic and acidic residues). Positions 522–535 (SPISSSSSQLSPLS) are enriched in low complexity. Residues 583–594 (PRPPPEPGPPDP) show a composition bias toward pro residues. Residues 628-637 (EDMEISDDEM) show a composition bias toward acidic residues. Residues 650–669 (PMVVTPGAGAVAAPNVLAPN) show a composition bias toward low complexity. The segment covering 670–710 (LPLPPPPGFPPLPPPPPPPPPQPGFPMPPPLPPPPPPPPPA) has biased composition (pro residues). 2 positions are modified to phosphoserine: serine 977 and serine 985. The span at 986–1006 (ERERDRDIADAPCELTKRDPK) shows a compositional bias: basic and acidic residues. Serine 1022 carries the post-translational modification Phosphoserine. The span at 1032 to 1055 (LSASSSSSASSSSGSSTTSPSSSA) shows a compositional bias: low complexity. Positions 1058–1083 (KEEEDRESTEEEEEEEEEEAEEEEEE) are enriched in acidic residues. Low complexity predominate over residues 1087 to 1097 (SRISSPSSSSS). A compositionally biased stretch (acidic residues) spans 1100-1120 (KDDEDDNEADSDGQIDSDIDD). The segment covering 1143–1178 (SITTSKAPAESSSSSSESSGSSEFESSSESESSSSS) has biased composition (low complexity). The span at 1179 to 1202 (SEDEEEMTVPGVEEEEEEEEEEEK) shows a compositional bias: acidic residues. Residues 1205–1217 (AMAAATVVAMAEE) show a composition bias toward low complexity. A compositionally biased stretch (acidic residues) spans 1247-1261 (GTEEEVDIEAEDEVP). A phosphoserine mark is found at serine 1283, serine 1301, and serine 1354. Over residues 1331–1373 (EPPPMLSLPLQPPLPPPRLLRPPSPPPEPETPEPPKPPVPLEP) the composition is skewed to pro residues. Positions 1402–1442 (PGGEPPLSGSSSGLSLSSPQVPGSPFSYPSPSPGLSSGGLP) are enriched in low complexity. Basic residues predominate over residues 1535–1544 (IKRKPGRPRR). 2 stretches are compositionally biased toward pro residues: residues 1600–1619 (PAPP…PPPV) and 1678–1687 (SPEPSPPQPL). 2 positions are modified to phosphoserine: serine 1678 and serine 1682. The short motif at 1764-1769 (GCARSE) is the WDR5 interaction motif (WIN) element. A disordered region spans residues 1786-1819 (SRASTDEPPMDTQGMSIPAQPHASTRAGSERRSE). Positions 1817–1822 (RSEQRR) match the RxxxRR motif motif. One can recognise an SET domain in the interval 1846 to 1963 (KKLKFCKSHI…VNEEITYDYK (118 aa)). Tyrosine 1962 contributes to the S-adenosyl-L-methionine binding site. One can recognise a Post-SET domain in the interval 1969 to 1985 (VKIPCLCGSENCRGTLN).

This sequence belongs to the class V-like SAM-binding methyltransferase superfamily. As to quaternary structure, component of the SET1B/COMPASS complex composed of the catalytic subunit SETD1B, WDR5, WDR82, RBBP5, ASH2L/ASH2, CXXC1/CFP1, HCFC1, DPY30 homotrimer and BOD1. Forms a core complex with the evolutionary conserved subcomplex WRAD composed of WDR5, RBBP5, ASH2L/ASH2 and DPY30 subunits; WRAD differentially stimulates the methyltransferase activity. Interacts with HCFC1 and ASH2L/ASH2. Interacts (via the RRM domain) with WDR82. Interacts (via the RRM domain) with hyperphosphorylated C-terminal domain (CTD) of RNA polymerase II large subunit (POLR2A) only in the presence of WDR82. Binds specifically to CTD heptad repeats phosphorylated on 'Ser-5' of each heptad. Interacts with RBM15. Interacts (via WIN motif) with WDR5. In terms of tissue distribution, widely expressed.

Its subcellular location is the nucleus. It localises to the nucleus speckle. The protein resides in the chromosome. It is found in the cytoplasm. It catalyses the reaction L-lysyl(4)-[histone H3] + S-adenosyl-L-methionine = N(6)-methyl-L-lysyl(4)-[histone H3] + S-adenosyl-L-homocysteine + H(+). The catalysed reaction is N(6)-methyl-L-lysyl(4)-[histone H3] + S-adenosyl-L-methionine = N(6),N(6)-dimethyl-L-lysyl(4)-[histone H3] + S-adenosyl-L-homocysteine + H(+). The enzyme catalyses N(6),N(6)-dimethyl-L-lysyl(4)-[histone H3] + S-adenosyl-L-methionine = N(6),N(6),N(6)-trimethyl-L-lysyl(4)-[histone H3] + S-adenosyl-L-homocysteine + H(+). Its function is as follows. Histone methyltransferase that catalyzes methyl group transfer from S-adenosyl-L-methionine to the epsilon-amino group of 'Lys-4' of histone H3 (H3K4) via a non-processive mechanism. Part of chromatin remodeling machinery, forms H3K4me1, H3K4me2 and H3K4me3 methylation marks at active chromatin sites where transcription and DNA repair take place. Plays an essential role in regulating the transcriptional programming of multipotent hematopoietic progenitor cells and lymphoid lineage specification during hematopoiesis. This Mus musculus (Mouse) protein is Histone-lysine N-methyltransferase SETD1B (Setd1b).